A 76-amino-acid chain; its full sequence is uncharacterized protein (76 aa).

It localises to the plastid. This is an uncharacterized protein from Euglena longa (Euglenophycean alga).